We begin with the raw amino-acid sequence, 183 residues long: Interleukin-24 (183 aa).

An N-terminal signal peptide occupies residues methionine 1–glycine 28. Cysteines 36 and 83 form a disulfide. An N-linked (GlcNAc...) asparagine glycan is attached at asparagine 76. Lysine 99 participates in a covalent cross-link: Glycyl lysine isopeptide (Lys-Gly) (interchain with G-Cter in ubiquitin).

Belongs to the IL-10 family. Post-translationally, glycosylated. In terms of processing, ubiquitination at Lys-99 promotes proteasomal degradation.

The protein localises to the secreted. In terms of biological role, multifunctional cytokine mainly produced by T-cells that plays a regulatory role in immune response, tissue homeostasis, host defense, and oncogenesis. Possesses antiviral functions and induces the type I interferon response during influenza infection. Signals through two receptor complexes IL20RA/IL20RB or IL20RB/IL22RA1. In turn, stimulates the JAK1-STAT3 and MAPK pathways and promotes the secretion of pro-inflammatory mediators including IL8 and MMP1. Intracellularly, maintains endoplasmic reticulum homeostasis by restricting the eIF2alpha-CHOP pathway-mediated stress signal. In addition, acts as a quality control mechanism for the ubiquitin proteasome system by alerting the cell to proteasome dysfunction through activation of PKR/EIF2AK2. The sequence is that of Interleukin-24 (Il24) from Rattus norvegicus (Rat).